The sequence spans 199 residues: MIARDDITGLILAGGRGSRMGGTDKGLQPLRGTPMAMHTMMRLTPQTGALMINANRNLAAYESFGVPVVTDSVPDFAGPLAGMLAGLEQCQTGWMVTAPCDSPFLPADLVPRLAQAIEAEGAELAIPVTVDTDGRRQLQPVFCLMPVSMLDDLIAYLNGGGRKIETWATSHRLAEVLFDDAGAFANINTLDELRTHEAG.

GTP contacts are provided by residues Leu-12–Gly-14, Lys-25, Asn-53, Asp-71, and Asp-101. Asp-101 provides a ligand contact to Mg(2+).

Belongs to the MobA family. Monomer. The cofactor is Mg(2+).

The protein resides in the cytoplasm. It catalyses the reaction Mo-molybdopterin + GTP + H(+) = Mo-molybdopterin guanine dinucleotide + diphosphate. Transfers a GMP moiety from GTP to Mo-molybdopterin (Mo-MPT) cofactor (Moco or molybdenum cofactor) to form Mo-molybdopterin guanine dinucleotide (Mo-MGD) cofactor. The chain is Molybdenum cofactor guanylyltransferase from Cupriavidus pinatubonensis (strain JMP 134 / LMG 1197) (Cupriavidus necator (strain JMP 134)).